The primary structure comprises 235 residues: REF/SRPP-like protein At2g47780 (235 aa).

Residues 1–12 show a composition bias toward acidic residues; it reads MAEDEIVVEEEQ. Residues 1 to 32 form a disordered region; the sequence is MAEDEIVVEEEQSQPQEITPVPPSSSSSPSLV.

It belongs to the REF/SRPP family.

This Arabidopsis thaliana (Mouse-ear cress) protein is REF/SRPP-like protein At2g47780.